A 460-amino-acid chain; its full sequence is UDP-N-acetylmuramoyl-tripeptide--D-alanyl-D-alanine ligase (460 aa).

Position 115 to 121 (115 to 121) interacts with ATP; that stretch reads GSSGKTS.

The protein belongs to the MurCDEF family. MurF subfamily.

The protein resides in the cytoplasm. The catalysed reaction is D-alanyl-D-alanine + UDP-N-acetyl-alpha-D-muramoyl-L-alanyl-gamma-D-glutamyl-meso-2,6-diaminopimelate + ATP = UDP-N-acetyl-alpha-D-muramoyl-L-alanyl-gamma-D-glutamyl-meso-2,6-diaminopimeloyl-D-alanyl-D-alanine + ADP + phosphate + H(+). It participates in cell wall biogenesis; peptidoglycan biosynthesis. In terms of biological role, involved in cell wall formation. Catalyzes the final step in the synthesis of UDP-N-acetylmuramoyl-pentapeptide, the precursor of murein. The protein is UDP-N-acetylmuramoyl-tripeptide--D-alanyl-D-alanine ligase of Buchnera aphidicola subsp. Baizongia pistaciae (strain Bp).